The chain runs to 388 residues: Processive diacylglycerol beta-glucosyltransferase (388 aa).

It belongs to the glycosyltransferase 28 family. UgtP subfamily.

The protein localises to the cell membrane. The enzyme catalyses a 1,2-diacyl-3-O-(beta-D-glucopyranosyl)-sn-glycerol + UDP-alpha-D-glucose = a 1,2-diacyl-3-O-(beta-D-Glc-(1-&gt;6)-beta-D-Glc)-sn-glycerol + UDP + H(+). The catalysed reaction is a 1,2-diacyl-3-O-(beta-D-Glc-(1-&gt;6)-beta-D-Glc)-sn-glycerol + UDP-alpha-D-glucose = a 1,2-diacyl-3-O-(beta-D-Glc-(1-&gt;6)-beta-D-Glc-(1-&gt;6)-beta-D-Glc)-sn-glycerol + UDP + H(+). It carries out the reaction a 1,2-diacyl-sn-glycerol + UDP-alpha-D-glucose = a 1,2-diacyl-3-O-(beta-D-glucopyranosyl)-sn-glycerol + UDP + H(+). It functions in the pathway glycolipid metabolism; diglucosyl-diacylglycerol biosynthesis. In terms of biological role, processive glucosyltransferase involved in the biosynthesis of both the bilayer- and non-bilayer-forming membrane glucolipids. Is able to successively transfer up to three glucosyl residues to diacylglycerol (DAG), thereby catalyzing the formation of beta-monoglucosyl-DAG (3-O-(beta-D-glucopyranosyl)-1,2-diacyl-sn-glycerol), beta-diglucosyl-DAG (3-O-(beta-D-glucopyranosyl-beta-(1-&gt;6)-D-glucopyranosyl)-1,2-diacyl-sn-glycerol) and beta-triglucosyl-DAG (3-O-(beta-D-glucopyranosyl-beta-(1-&gt;6)-D-glucopyranosyl-beta-(1-&gt;6)-D-glucopyranosyl)-1,2-diacyl-sn-glycerol). Beta-diglucosyl-DAG is the predominant glycolipid found in Bacillales and is also used as a membrane anchor for lipoteichoic acid (LTA). This Bacillus cereus (strain ZK / E33L) protein is Processive diacylglycerol beta-glucosyltransferase.